Consider the following 415-residue polypeptide: MAQANLSEILFKPKFKHPETSTLVRHAHCNQAMNVHSALDGDTTSHWYRMINRLIWTWRGVDPLEIEEVLSRIACSKAEHSDNELLDTVVGYRNGNWIYEWAHQGMQWQQKAMEEADPMNAGQYWLNAANLYSIAGYPHLKGDELAEQVEVLSNRAYEEAAKHLPYTLKELSFDISDGGTLTGFLHMPTIGSAPFPTVLMCGGLDTLQSDYHRLFRDYLAPKGIAMLTIDLPSVGASSKWKLTQDTSFLHQQVLQALPNIPWIDHLRVSVFGFRFGANVAVRLGYLEPQRVRAVACLGPIVHHLLCNADSQRKLPDMYMDVMASRLGMADAADEILRAEMNRYSLKTQGLLGRRCQTPMLAGFWENDPFSPKEEAKLICSSSADGKLLPISSTPLYDNFHRALLQTSQWLEDKMR.

This sequence belongs to the FrsA family.

The catalysed reaction is a carboxylic ester + H2O = an alcohol + a carboxylate + H(+). Functionally, catalyzes the hydrolysis of esters. This Yersinia enterocolitica serotype O:8 / biotype 1B (strain NCTC 13174 / 8081) protein is Esterase FrsA.